We begin with the raw amino-acid sequence, 111 residues long: Small ubiquitin-related modifier 3 (111 aa).

The region spanning 16-93 (AHVILKVKSQ…IDACRAMSGG (78 aa)) is the Ubiquitin-like domain. Residue G93 forms a Glycyl lysine isopeptide (Gly-Lys) (interchain with K-? in acceptor proteins) linkage.

The protein belongs to the ubiquitin family. SUMO subfamily. In terms of assembly, interacts with SAE2, SCE1, SIZ1 and MMS21. Covalently attached to a number of proteins. Interacts with NPR1; this interaction promotes NPR1 phosphorylation and triggers its sumoylation and subsequent degradation.

It localises to the nucleus. Its subcellular location is the cytoplasm. Ubiquitin-like protein which can be covalently attached to target lysines as a monomer. Does not seem to be involved in protein degradation and may function as an antagonist of ubiquitin in the degradation process. Promotes NPR1 sumoylation to activate defense gene expression and regulate its degradation. The chain is Small ubiquitin-related modifier 3 from Arabidopsis thaliana (Mouse-ear cress).